We begin with the raw amino-acid sequence, 441 residues long: Maltose-6'-phosphate glucosidase (441 aa).

An NAD(+)-binding site is contributed by 4–70 (FSILIAGGGS…PQIKFSYSTN (67 aa)). 2 residues coordinate substrate: arginine 93 and asparagine 147. Mn(2+) is bound at residue cysteine 169. Catalysis depends on aspartate 170, which acts as the Proton donor. Histidine 200 contacts Mn(2+). The active-site Proton acceptor is the tyrosine 264. Residue arginine 284 participates in substrate binding.

It belongs to the glycosyl hydrolase 4 family. In terms of assembly, homotetramer. NAD(+) is required as a cofactor. Requires Mn(2+) as cofactor. It depends on Fe(2+) as a cofactor. The cofactor is Co(2+). Ni(2+) serves as cofactor.

The enzyme catalyses alpha-maltose 6'-phosphate + H2O = D-glucose 6-phosphate + D-glucose. It participates in glycan degradation; maltose degradation. In terms of biological role, hydrolyzes a wide variety of 6-phospho-alpha-D-glucosides including maltose-6'P, trehalose-6P and the 6'-phosphorylated derivatives of the five linkage-isomeric alpha-D-glucosyl-D-fructoses: trehalulose-6'P, turanose-6'P, maltulose-6'P, leucrose-6'P, and palatinose-6'P. However, sucrose-6P is not a substrate for MalH, and this enzyme also fails to hydrolyze beta-O-linked phosphorylated disaccharides such as cellobiose-6'P and gentobiose-6'P. The chain is Maltose-6'-phosphate glucosidase (malH) from Fusobacterium mortiferum.